The sequence spans 148 residues: Putative nickel-responsive regulator (148 aa).

The Ni(2+) site is built by histidine 88, histidine 99, histidine 101, and cysteine 107.

It belongs to the transcriptional regulatory CopG/NikR family. Ni(2+) serves as cofactor.

Functionally, transcriptional regulator. This Helicobacter pylori (strain HPAG1) protein is Putative nickel-responsive regulator.